The sequence spans 631 residues: Phosphomethylpyrimidine synthase (631 aa).

Substrate contacts are provided by residues Asn239, Met268, Tyr297, His333, 353–355 (SRG), 394–397 (DGLR), and Glu433. His437 is a binding site for Zn(2+). Tyr460 contacts substrate. His501 serves as a coordination point for Zn(2+). Cys581, Cys584, and Cys589 together coordinate [4Fe-4S] cluster.

Belongs to the ThiC family. Homodimer. [4Fe-4S] cluster serves as cofactor.

The catalysed reaction is 5-amino-1-(5-phospho-beta-D-ribosyl)imidazole + S-adenosyl-L-methionine = 4-amino-2-methyl-5-(phosphooxymethyl)pyrimidine + CO + 5'-deoxyadenosine + formate + L-methionine + 3 H(+). Its pathway is cofactor biosynthesis; thiamine diphosphate biosynthesis. Functionally, catalyzes the synthesis of the hydroxymethylpyrimidine phosphate (HMP-P) moiety of thiamine from aminoimidazole ribotide (AIR) in a radical S-adenosyl-L-methionine (SAM)-dependent reaction. In Salmonella gallinarum (strain 287/91 / NCTC 13346), this protein is Phosphomethylpyrimidine synthase.